The sequence spans 525 residues: GMP synthase [glutamine-hydrolyzing] (525 aa).

Residues 8 to 207 enclose the Glutamine amidotransferase type-1 domain; that stretch reads KILILDFGSQ…VMDICGCDNK (200 aa). The active-site Nucleophile is the cysteine 85. Residues histidine 181 and glutamate 183 contribute to the active site. Residues 208 to 400 form the GMPS ATP-PPase domain; that stretch reads WQPASIIEDA…LGLPYDMLYR (193 aa). ATP is bound at residue 235–241; that stretch reads SGGVDSS.

As to quaternary structure, homodimer.

The catalysed reaction is XMP + L-glutamine + ATP + H2O = GMP + L-glutamate + AMP + diphosphate + 2 H(+). Its pathway is purine metabolism; GMP biosynthesis; GMP from XMP (L-Gln route): step 1/1. Its function is as follows. Catalyzes the synthesis of GMP from XMP. This Shewanella amazonensis (strain ATCC BAA-1098 / SB2B) protein is GMP synthase [glutamine-hydrolyzing].